A 307-amino-acid polypeptide reads, in one-letter code: tRNA pseudouridine synthase B (307 aa).

The active-site Nucleophile is aspartate 38.

It belongs to the pseudouridine synthase TruB family. Type 1 subfamily.

It carries out the reaction uridine(55) in tRNA = pseudouridine(55) in tRNA. Its function is as follows. Responsible for synthesis of pseudouridine from uracil-55 in the psi GC loop of transfer RNAs. The protein is tRNA pseudouridine synthase B of Bacillus cytotoxicus (strain DSM 22905 / CIP 110041 / 391-98 / NVH 391-98).